The primary structure comprises 1401 residues: DNA-directed RNA polymerase subunit beta' (1401 aa).

Zn(2+) is bound by residues cysteine 70, cysteine 72, cysteine 85, and cysteine 88. Aspartate 460, aspartate 462, and aspartate 464 together coordinate Mg(2+). Residues cysteine 808, cysteine 882, cysteine 889, and cysteine 892 each contribute to the Zn(2+) site.

Belongs to the RNA polymerase beta' chain family. The RNAP catalytic core consists of 2 alpha, 1 beta, 1 beta' and 1 omega subunit. When a sigma factor is associated with the core the holoenzyme is formed, which can initiate transcription. Mg(2+) is required as a cofactor. The cofactor is Zn(2+).

The enzyme catalyses RNA(n) + a ribonucleoside 5'-triphosphate = RNA(n+1) + diphosphate. Functionally, DNA-dependent RNA polymerase catalyzes the transcription of DNA into RNA using the four ribonucleoside triphosphates as substrates. The polypeptide is DNA-directed RNA polymerase subunit beta' (Legionella pneumophila subsp. pneumophila (strain Philadelphia 1 / ATCC 33152 / DSM 7513)).